A 487-amino-acid chain; its full sequence is Glutamyl-tRNA(Gln) amidotransferase subunit A (487 aa).

Active-site charge relay system residues include lysine 79 and serine 154. The Acyl-ester intermediate role is filled by serine 178.

This sequence belongs to the amidase family. GatA subfamily. As to quaternary structure, heterotrimer of A, B and C subunits.

The catalysed reaction is L-glutamyl-tRNA(Gln) + L-glutamine + ATP + H2O = L-glutaminyl-tRNA(Gln) + L-glutamate + ADP + phosphate + H(+). Allows the formation of correctly charged Gln-tRNA(Gln) through the transamidation of misacylated Glu-tRNA(Gln) in organisms which lack glutaminyl-tRNA synthetase. The reaction takes place in the presence of glutamine and ATP through an activated gamma-phospho-Glu-tRNA(Gln). This chain is Glutamyl-tRNA(Gln) amidotransferase subunit A, found in Heliobacterium modesticaldum (strain ATCC 51547 / Ice1).